The following is a 455-amino-acid chain: Adenylyltransferase and sulfurtransferase MOCS3 (455 aa).

ATP is bound by residues G90, D111, 118 to 122 (SNLAR), K135, and 179 to 180 (DN). The interval 156–236 (AQALTPATAL…RPPPAETVTS (81 aa)) is interaction with NFS1. The Zn(2+) site is built by C220 and C223. Catalysis depends on C237, which acts as the Glycyl thioester intermediate; for adenylyltransferase activity. The Zn(2+) site is built by C295 and C298. The cysteines at positions 314 and 322 are disulfide-linked. The Rhodanese domain occupies 345 to 453 (SRSPHLLLDV…WAAKIDGTFP (109 aa)). The Cysteine persulfide intermediate; for sulfurtransferase activity role is filled by C410. C410 carries the cysteine persulfide modification.

In the N-terminal section; belongs to the HesA/MoeB/ThiF family. UBA4 subfamily. Interacts with NFS1. It depends on Zn(2+) as a cofactor.

The protein localises to the cytoplasm. The protein resides in the cytosol. It carries out the reaction [molybdopterin-synthase sulfur-carrier protein]-C-terminal Gly-Gly + ATP + H(+) = [molybdopterin-synthase sulfur-carrier protein]-C-terminal Gly-Gly-AMP + diphosphate. The catalysed reaction is [molybdopterin-synthase sulfur-carrier protein]-C-terminal Gly-Gly-AMP + S-sulfanyl-L-cysteinyl-[cysteine desulfurase] + AH2 = [molybdopterin-synthase sulfur-carrier protein]-C-terminal-Gly-aminoethanethioate + L-cysteinyl-[cysteine desulfurase] + A + AMP + 2 H(+). Its pathway is tRNA modification; 5-methoxycarbonylmethyl-2-thiouridine-tRNA biosynthesis. The protein operates within cofactor biosynthesis; molybdopterin biosynthesis. Its function is as follows. Plays a central role in 2-thiolation of mcm(5)S(2)U at tRNA wobble positions of cytosolic tRNA(Lys), tRNA(Glu) and tRNA(Gln). Also essential during biosynthesis of the molybdenum cofactor. Acts by mediating the C-terminal thiocarboxylation of sulfur carriers URM1 and MOCS2A. Its N-terminus first activates URM1 and MOCS2A as acyl-adenylates (-COAMP), then the persulfide sulfur on the catalytic cysteine is transferred to URM1 and MOCS2A to form thiocarboxylation (-COSH) of their C-terminus. The reaction probably involves hydrogen sulfide that is generated from the persulfide intermediate and that acts as a nucleophile towards URM1 and MOCS2A. Subsequently, a transient disulfide bond is formed. Does not use thiosulfate as sulfur donor; NFS1 acting as a sulfur donor for thiocarboxylation reactions. The polypeptide is Adenylyltransferase and sulfurtransferase MOCS3 (Bos taurus (Bovine)).